The chain runs to 625 residues: ATP-dependent rRNA helicase spb4 (625 aa).

A Q motif motif is present at residues 14–42 (WDALTPSLAEWILDAIKSMGFEKMTPVQA). In terms of domain architecture, Helicase ATP-binding spans 45 to 246 (IPLFMGNKDV…RVGLRNPVKI (202 aa)). Residue 58–65 (AVTGSGKT) coordinates ATP. Residues 194-197 (DEAD) carry the DEAD box motif. One can recognise a Helicase C-terminal domain in the interval 278–436 (ALLSLLSQLQ…TTDDAAKILI (159 aa)). Residues 550–597 (KKQREAWSQKHEKQDLKELKREKKKRKREIERLDKMTDEEKRVEQEKE) are disordered. 2 stretches are compositionally biased toward basic and acidic residues: residues 553–570 (REAW…ELKR) and 577–597 (REIE…QEKE). The stretch at 557 to 614 (SQKHEKQDLKELKREKKKRKREIERLDKMTDEEKRVEQEKERELQALIEQVKRRKIED) forms a coiled coil.

It belongs to the DEAD box helicase family. DDX55/SPB4 subfamily. Component of pre-60S ribosomal complexes.

Its subcellular location is the nucleus. The protein resides in the nucleolus. The enzyme catalyses ATP + H2O = ADP + phosphate + H(+). ATP-binding RNA helicase involved in the biogenesis of 60S ribosomal subunits. Binds 90S pre-ribosomal particles and dissociates from pre-60S ribosomal particles after processing of 27SB pre-rRNA. Required for the normal formation of 18S rRNA through the processing of pre-rRNAs at sites A0, A1 and A2, and the normal formation of 25S and 5.8S rRNAs through the processing of pre-rRNAs at sites C1 and C2. The chain is ATP-dependent rRNA helicase spb4 from Sclerotinia sclerotiorum (strain ATCC 18683 / 1980 / Ss-1) (White mold).